Consider the following 2285-residue polypeptide: AT-rich interactive domain-containing protein 1A (2285 aa).

Positions 1–14 are enriched in low complexity; the sequence is MAAQVAPAAASSLG. Disordered regions lie at residues 1–820 and 978–1005; these read MAAQ…ALPN and ATKMNNKADGTPKTESKSKKSSSSTTTN. Ala2 is modified (N-acetylalanine). Residues 23-35 show a composition bias toward basic and acidic residues; sequence ELKKAEQQQREEA. Phosphoserine is present on residues Ser58 and Ser79. Gly residues-rich tracts occupy residues 79–95 and 121–130; these read SNGGGGGGGAGSGGGPG and PGGGGGGSSD. Composition is skewed to low complexity over residues 131–142, 212–221, and 228–265; these read GVGAPPHSAAAA, YNSYYPNRSA, and AYALSSPRGGTPGSGAAAAAGSKPPPSSSASASSSSSS. Ser233 carries the phosphoserine modification. Residues 273 to 286 are compositionally biased toward gly residues; it reads AMGGGGPSAAGGGT. Thr286 carries the post-translational modification Phosphothreonine. The LXXLL signature appears at 295-299; that stretch reads LNQLL. Polar residues predominate over residues 295–306; it reads LNQLLTSPSSAR. Ser301 is modified (phosphoserine). A compositionally biased stretch (gly residues) spans 310-327; the sequence is GYPGGDYSGGPQDGGAGK. Residues 338–353 are compositionally biased toward low complexity; it reads GAAAAAAAAAAASGGA. Phosphoserine is present on residues Ser363 and Ser382. The segment covering 400–425 has biased composition (low complexity); the sequence is PYSQQQGPPSGPQQGHGYPGQPYGSQ. Arg429 carries the post-translational modification Asymmetric dimethylarginine. Composition is skewed to low complexity over residues 447-457, 465-546, and 553-595; these read YTQQIPPYGQQ, QGQT…QHPQ, and QPQA…YSQQ. Ser604 carries the post-translational modification Phosphoserine. Residues 610–621 show a composition bias toward low complexity; sequence SQASSAPSMTSS. A compositionally biased stretch (polar residues) spans 628–637; it reads MNLSLQSRPS. Over residues 658–674 the composition is skewed to low complexity; the sequence is SPGVSTSGISSSQGEQS. Over residues 675–685 the composition is skewed to polar residues; that stretch reads NPAQSPFSPHT. A phosphoserine mark is found at Ser696, Ser698, Ser702, Ser730, Ser764, and Ser772. Composition is skewed to polar residues over residues 730 to 747 and 755 to 793; these read SGQSDSIMHPSMNQSSIA and RNPQMPQYSSPQPGSALSPRQPSGGQIHTGMGSYQQNSM. A compositionally biased stretch (gly residues) spans 797–807; it reads GPQGGQYGPQG. Residues 808 to 820 are compositionally biased toward low complexity; the sequence is GYPRQPNYNALPN. An ARID domain is found at 1017-1108; sequence EPERKMWVDR…CLYAFECKIE (92 aa). 2 disordered regions span residues 1113–1483 and 1539–1603; these read PPPD…MMGG and ANHE…SPSK. The span at 1141–1154 shows a compositional bias: low complexity; the sequence is MQGPQTPQSTSSSM. Residues 1162-1177 are compositionally biased toward pro residues; it reads PPTPASTPHSQIPPLP. Ser1184 is modified (phosphoserine). The span at 1194–1219 shows a compositional bias: polar residues; that stretch reads GSDSTFQKRNSMTPNPGYQPSMNTSD. Residue Ser1235 is modified to Phosphoserine. Arg1276 bears the Omega-N-methylarginine mark. 2 stretches are compositionally biased toward polar residues: residues 1299–1315 and 1339–1356; these read NMSTGAPQPNLMPSNPD and YGNQFSTQGTPSGSPFPS. Residues 1357–1367 are compositionally biased toward low complexity; it reads QQTTMYQQQQQ. Residues 1368-1387 carry the Nuclear localization signal motif; the sequence is NYKRPMDGTYGPPAKRHEGE. The segment covering 1396–1425 has biased composition (low complexity); sequence GQGQPQQQQLPPAQPQPASQQQAAQPSPQQ. Over residues 1468–1477 the composition is skewed to polar residues; sequence PGTNAQQNMP. Over residues 1554–1577 the composition is skewed to pro residues; the sequence is PYGPSAPVPPMTRPPPSNYQPPPS. A Phosphoserine modification is found at Ser1604. Lys1612 is subject to N6-acetyllysine. The LXXLL motif lies at 1709–1713; the sequence is LPGLL. Disordered stretches follow at residues 1747-1774 and 1859-1907; these read PGRFSKVSSPAPMEGGEEEEELLGPKLE and FESK…EKRI. Ser1751 and Ser1754 each carry phosphoserine. The segment covering 1761 to 1774 has biased composition (acidic residues); the sequence is GGEEEEELLGPKLE. Residues 1886–1895 show a composition bias toward low complexity; it reads EGTPGTTDQE. Residue Thr1888 is modified to Phosphothreonine. The residue at position 1905 (Lys1905) is an N6-acetyllysine. Phosphoserine is present on residues Ser1929 and Ser1944. Short sequence motifs (LXXLL) lie at residues 1967 to 1971 and 2085 to 2089; these read LCTLL and LDGLL.

In terms of assembly, component of SWI/SNF chromatin remodeling complexes, in some of which it can be mutually exclusive with ARID1B/BAF250B. The canonical complex contains a catalytic subunit (either SMARCA4/BRG1/BAF190A or SMARCA2/BRM/BAF190B) and at least SMARCE1, ACTL6A/BAF53, SMARCC1/BAF155, SMARCC2/BAF170, and SMARCB1/SNF5/BAF47. Other subunits specific to each of the complexes may also be present permitting several possible combinations developmentally and tissue specific. Component of the BAF (SWI/SNF-A) complex, which includes at least actin (ACTB), ARID1A/BAF250A, ARID1B/BAF250B, SMARCA2/BRM, SMARCA4/BRG1/BAF190A, ACTL6A/BAF53, ACTL6B/BAF53B, SMARCE1/BAF57, SMARCC1/BAF155, SMARCC2/BAF170, SMARCB1/SNF5/INI1, and one or more SMARCD1/BAF60A, SMARCD2/BAF60B, or SMARCD3/BAF60C. In muscle cells, the BAF complex also contains DPF3. Component of neural progenitors-specific chromatin remodeling complex (npBAF complex) composed of at least, ARID1A/BAF250A or ARID1B/BAF250B, SMARCD1/BAF60A, SMARCD3/BAF60C, SMARCA2/BRM/BAF190B, SMARCA4/BRG1/BAF190A, SMARCB1/BAF47, SMARCC1/BAF155, SMARCE1/BAF57, SMARCC2/BAF170, PHF10/BAF45A, ACTL6A/BAF53A and actin. Component of neuron-specific chromatin remodeling complex (nBAF complex) composed of at least, ARID1A/BAF250A or ARID1B/BAF250B, SMARCD1/BAF60A, SMARCD3/BAF60C, SMARCA2/BRM/BAF190B, SMARCA4/BRG1/BAF190A, SMARCB1/BAF47, SMARCC1/BAF155, SMARCE1/BAF57, SMARCC2/BAF170, DPF1/BAF45B, DPF3/BAF45C, ACTL6B/BAF53B and actin. Component of a SWI/SNF-like EBAFa complex, at least composed of SMARCA4/BRG1/BAF190A, SMARCB1/BAF47/SNF5, ACTL6A/BAF53A, SMARCE1/BAF57, SMARCD1/BAF60A, SMARCC1/BAF155, SMARCC2/BAF170, BAF250A and MLLT1/ENL. Interacts through its C-terminus with SMARCA2/BRM/BAF190B and SMARCA4/BRG1/BAF190A. Interacts with SMARCC1/BAF155. Interacts with FOS, FOSB isoform 1 and 2, FOSL1 and FOSL2. As to expression, highly expressed in spleen, thymus, prostate, testis, ovary, small intestine, colon, and PBL, and at a much lower level in heart, brain, placenta, lung, liver, skeletal muscle, kidney, and pancreas.

The protein resides in the nucleus. In terms of biological role, involved in transcriptional activation and repression of select genes by chromatin remodeling (alteration of DNA-nucleosome topology). Component of SWI/SNF chromatin remodeling complexes that carry out key enzymatic activities, changing chromatin structure by altering DNA-histone contacts within a nucleosome in an ATP-dependent manner. Binds DNA non-specifically. Belongs to the neural progenitors-specific chromatin remodeling complex (npBAF complex) and the neuron-specific chromatin remodeling complex (nBAF complex). During neural development a switch from a stem/progenitor to a postmitotic chromatin remodeling mechanism occurs as neurons exit the cell cycle and become committed to their adult state. The transition from proliferating neural stem/progenitor cells to postmitotic neurons requires a switch in subunit composition of the npBAF and nBAF complexes. As neural progenitors exit mitosis and differentiate into neurons, npBAF complexes which contain ACTL6A/BAF53A and PHF10/BAF45A, are exchanged for homologous alternative ACTL6B/BAF53B and DPF1/BAF45B or DPF3/BAF45C subunits in neuron-specific complexes (nBAF). The npBAF complex is essential for the self-renewal/proliferative capacity of the multipotent neural stem cells. The nBAF complex along with CREST plays a role regulating the activity of genes essential for dendrite growth. The protein is AT-rich interactive domain-containing protein 1A (ARID1A) of Homo sapiens (Human).